The following is a 454-amino-acid chain: Bifunctional protein GlmU (454 aa).

Positions 1-227 (MKKLSVVILA…KMEVEGANNR (227 aa)) are pyrophosphorylase. UDP-N-acetyl-alpha-D-glucosamine contacts are provided by residues 9-12 (LAAG), Lys23, Gln74, 79-80 (GT), 101-103 (YGD), Gly138, Glu152, Asn167, and Asn225. Asp103 is a Mg(2+) binding site. A Mg(2+)-binding site is contributed by Asn225. Residues 228–248 (LQLAALERYYQHKQAERLLLE) form a linker region. An N-acetyltransferase region spans residues 249-454 (GVMLIDPARF…AGWQRPTKKK (206 aa)). 2 residues coordinate UDP-N-acetyl-alpha-D-glucosamine: Arg331 and Lys349. His361 (proton acceptor) is an active-site residue. UDP-N-acetyl-alpha-D-glucosamine-binding residues include Tyr364 and Asn375. Residues Ala378, 384–385 (NY), Ser403, Ala421, and Arg438 each bind acetyl-CoA.

It in the N-terminal section; belongs to the N-acetylglucosamine-1-phosphate uridyltransferase family. In the C-terminal section; belongs to the transferase hexapeptide repeat family. In terms of assembly, homotrimer. Mg(2+) is required as a cofactor.

The protein resides in the cytoplasm. The enzyme catalyses alpha-D-glucosamine 1-phosphate + acetyl-CoA = N-acetyl-alpha-D-glucosamine 1-phosphate + CoA + H(+). It catalyses the reaction N-acetyl-alpha-D-glucosamine 1-phosphate + UTP + H(+) = UDP-N-acetyl-alpha-D-glucosamine + diphosphate. It functions in the pathway nucleotide-sugar biosynthesis; UDP-N-acetyl-alpha-D-glucosamine biosynthesis; N-acetyl-alpha-D-glucosamine 1-phosphate from alpha-D-glucosamine 6-phosphate (route II): step 2/2. Its pathway is nucleotide-sugar biosynthesis; UDP-N-acetyl-alpha-D-glucosamine biosynthesis; UDP-N-acetyl-alpha-D-glucosamine from N-acetyl-alpha-D-glucosamine 1-phosphate: step 1/1. It participates in bacterial outer membrane biogenesis; LPS lipid A biosynthesis. Catalyzes the last two sequential reactions in the de novo biosynthetic pathway for UDP-N-acetylglucosamine (UDP-GlcNAc). The C-terminal domain catalyzes the transfer of acetyl group from acetyl coenzyme A to glucosamine-1-phosphate (GlcN-1-P) to produce N-acetylglucosamine-1-phosphate (GlcNAc-1-P), which is converted into UDP-GlcNAc by the transfer of uridine 5-monophosphate (from uridine 5-triphosphate), a reaction catalyzed by the N-terminal domain. The polypeptide is Bifunctional protein GlmU (Mannheimia succiniciproducens (strain KCTC 0769BP / MBEL55E)).